The following is a 50-amino-acid chain: Large ribosomal subunit protein bL33 (50 aa).

It belongs to the bacterial ribosomal protein bL33 family.

This chain is Large ribosomal subunit protein bL33, found in Mycoplasmopsis synoviae (strain 53) (Mycoplasma synoviae).